A 622-amino-acid chain; its full sequence is Membrane protein insertase YidC (622 aa).

A helical membrane pass occupies residues 6-26 (IVLLIIFSTSLLFLWDAWVKE). The interval 47 to 87 (TQSKNNDGLPIPGSELTASQTGSDLNGIPSSGDTADSVTPR) is disordered. Over residues 62–83 (LTASQTGSDLNGIPSSGDTADS) the composition is skewed to polar residues. Transmembrane regions (helical) follow at residues 381 to 401 (WGIA…PLSA), 451 to 471 (FPIL…LAAV), and 525 to 545 (PVAF…YSLV). The tract at residues 563-622 (TAPSQDAPESPASKDAPELPVSNQVINDSENTEAPASGPADSPKKPVNIPRRMHKRTRKK) is disordered. A compositionally biased stretch (polar residues) spans 583–596 (VSNQVINDSENTEA). Residues 613–622 (RRMHKRTRKK) are compositionally biased toward basic residues.

Belongs to the OXA1/ALB3/YidC family. Type 1 subfamily. In terms of assembly, interacts with the Sec translocase complex via SecD. Specifically interacts with transmembrane segments of nascent integral membrane proteins during membrane integration.

The protein localises to the cell inner membrane. Its function is as follows. Required for the insertion and/or proper folding and/or complex formation of integral membrane proteins into the membrane. Involved in integration of membrane proteins that insert both dependently and independently of the Sec translocase complex, as well as at least some lipoproteins. Aids folding of multispanning membrane proteins. This Nitrosomonas eutropha (strain DSM 101675 / C91 / Nm57) protein is Membrane protein insertase YidC.